Consider the following 298-residue polypeptide: Iron/alpha-ketoglutarate-dependent dioxygenase ausO (298 aa).

The Fe cation site is built by His-130, Asp-132, and His-211.

The protein belongs to the PhyH family. In terms of assembly, homodimer. The cofactor is Fe cation.

Its pathway is secondary metabolite biosynthesis; terpenoid biosynthesis. Iron/alpha-ketoglutarate-dependent dioxygenase; part of the gene cluster that mediates the biosynthesis of calidodehydroaustin, a fungal meroterpenoid. The first step of the pathway is the synthesis of 3,5-dimethylorsellinic acid by the polyketide synthase ausA. 3,5-dimethylorsellinic acid is then prenylated by the polyprenyl transferase ausN. Further epoxidation by the FAD-dependent monooxygenase ausM and cyclization by the probable terpene cyclase ausL lead to the formation of protoaustinoid A. Protoaustinoid A is then oxidized to spiro-lactone preaustinoid A3 by the combined action of the FAD-binding monooxygenases ausB and ausC, and the dioxygenase ausE. Acid-catalyzed keto-rearrangement and ring contraction of the tetraketide portion of preaustinoid A3 by ausJ lead to the formation of preaustinoid A4. The aldo-keto reductase ausK, with the help of ausH, is involved in the next step by transforming preaustinoid A4 into isoaustinone which is in turn hydroxylated by the P450 monooxygenase ausI to form austinolide. The cytochrome P450 monooxygenase ausG modifies austinolide to austinol. Austinol is further acetylated to austin by the O-acetyltransferase ausP, which spontaneously changes to dehydroaustin. The cytochrome P450 monooxygenase ausR then converts dehydroaustin is into 7-dehydrodehydroaustin. The hydroxylation catalyzed by ausR permits the O-acetyltransferase ausQ to add an additional acetyl group to the molecule, leading to the formation of acetoxydehydroaustin. The short chain dehydrogenase ausT catalyzes the reduction of the double bond present between carbon atoms 1 and 2 to convert 7-dehydrodehydroaustin into 1,2-dihydro-7-hydroxydehydroaustin. AusQ catalyzes not only an acetylation reaction but also the addition of the PKS ausV diketide product to 1,2-dihydro-7-hydroxydehydroaustin, forming precalidodehydroaustin. Finally, the iron/alpha-ketoglutarate-dependent dioxygenase converts precalidodehydroaustin into calidodehydroaustin. The sequence is that of Iron/alpha-ketoglutarate-dependent dioxygenase ausO from Aspergillus calidoustus.